A 158-amino-acid chain; its full sequence is Cyclic pyranopterin monophosphate synthase (158 aa).

Residues 76–78 and 114–115 contribute to the substrate site; these read MCH and ME. Residue Asp-129 is part of the active site.

It belongs to the MoaC family. In terms of assembly, homohexamer; trimer of dimers.

It catalyses the reaction (8S)-3',8-cyclo-7,8-dihydroguanosine 5'-triphosphate = cyclic pyranopterin phosphate + diphosphate. The protein operates within cofactor biosynthesis; molybdopterin biosynthesis. Functionally, catalyzes the conversion of (8S)-3',8-cyclo-7,8-dihydroguanosine 5'-triphosphate to cyclic pyranopterin monophosphate (cPMP). In Clostridium perfringens (strain SM101 / Type A), this protein is Cyclic pyranopterin monophosphate synthase.